The chain runs to 134 residues: Thionin-2.1 (134 aa).

The N-terminal stretch at 1 to 24 (MKGRILILSLLIMSLVMAQVQVEA) is a signal peptide. 3 disulfides stabilise this stretch: Cys-27–Cys-61, Cys-28–Cys-55, and Cys-40–Cys-49. A propeptide spans 68–134 (AILENSADAT…VVPPGPPKLL (67 aa)) (acidic domain).

It belongs to the plant thionin (TC 1.C.44) family. In terms of tissue distribution, detected in rosette leaves and at a very high level in flowers and in siliques.

The protein localises to the secreted. Functionally, seems to function as a defense factor. Thionins are small plant proteins which are toxic to animal cells. They seem to exert their toxic effect at the level of the cell membrane. Their precise function is not known. This chain is Thionin-2.1 (THI2.1), found in Arabidopsis thaliana (Mouse-ear cress).